We begin with the raw amino-acid sequence, 818 residues long: Phenylalanine--tRNA ligase beta subunit (818 aa).

The region spanning 39-148 (AAELQKFEVA…EDAVVGENFT (110 aa)) is the tRNA-binding domain. The 76-residue stretch at 423–498 (SQKKPLDFSA…RIYGYDKIES (76 aa)) folds into the B5 domain. Residues aspartate 476, aspartate 482, glutamate 485, and glutamate 486 each contribute to the Mg(2+) site. In terms of domain architecture, FDX-ACB spans 724-817 (SDFQANFRDY…ISQKFQGTLR (94 aa)).

The protein belongs to the phenylalanyl-tRNA synthetase beta subunit family. Type 1 subfamily. In terms of assembly, tetramer of two alpha and two beta subunits. Mg(2+) is required as a cofactor.

It localises to the cytoplasm. It catalyses the reaction tRNA(Phe) + L-phenylalanine + ATP = L-phenylalanyl-tRNA(Phe) + AMP + diphosphate + H(+). This is Phenylalanine--tRNA ligase beta subunit from Rickettsia conorii (strain ATCC VR-613 / Malish 7).